Reading from the N-terminus, the 148-residue chain is uncharacterized protein (148 aa).

The 62-residue stretch at 4–65 folds into the HTH asnC-type domain; the sequence is LDRVDMQLVK…IPDIDKLGYM (62 aa). Positions 23 to 42 form a DNA-binding region, H-T-H motif; that stretch reads YRELADILNTTRQRIARRID.

This is an uncharacterized protein from Pyrococcus horikoshii (strain ATCC 700860 / DSM 12428 / JCM 9974 / NBRC 100139 / OT-3).